A 213-amino-acid polypeptide reads, in one-letter code: Large ribosomal subunit protein uL1 (213 aa).

Belongs to the universal ribosomal protein uL1 family. Part of the 50S ribosomal subunit.

In terms of biological role, binds directly to 23S rRNA. Probably involved in E site tRNA release. Protein L1 is also a translational repressor protein, it controls the translation of its operon by binding to its mRNA. The chain is Large ribosomal subunit protein uL1 from Methanocorpusculum labreanum (strain ATCC 43576 / DSM 4855 / Z).